We begin with the raw amino-acid sequence, 382 residues long: Na(+)/H(+) antiporter NhaA 2 (382 aa).

The next 11 membrane-spanning stretches (helical) occupy residues 7–27, 58–78, 94–114, 124–144, 153–173, 178–198, 199–219, 255–275, 291–311, 327–347, and 361–381; these read MALS…LALL, LDLW…GLEL, SLPI…FAAI, GWAI…MLLG, LFLL…IALF, LSAL…LLNY, YHIT…IAML, NPWV…GIDI, IILG…FIAI, FYGI…IDGL, and LAIL…LKIV.

It belongs to the NhaA Na(+)/H(+) (TC 2.A.33) antiporter family.

It localises to the cell inner membrane. It catalyses the reaction Na(+)(in) + 2 H(+)(out) = Na(+)(out) + 2 H(+)(in). Functionally, na(+)/H(+) antiporter that extrudes sodium in exchange for external protons. In Campylobacter jejuni subsp. doylei (strain ATCC BAA-1458 / RM4099 / 269.97), this protein is Na(+)/H(+) antiporter NhaA 2.